The sequence spans 417 residues: Multifunctional CCA protein (417 aa).

ATP is bound by residues glycine 8 and arginine 11. Residues glycine 8 and arginine 11 each contribute to the CTP site. Mg(2+)-binding residues include aspartate 21 and aspartate 23. Positions 91, 137, and 140 each coordinate ATP. CTP is bound by residues arginine 91, arginine 137, and arginine 140. The region spanning 225–326 (SGIHTLMTLQ…LNVLKKTDAF (102 aa)) is the HD domain.

It belongs to the tRNA nucleotidyltransferase/poly(A) polymerase family. Bacterial CCA-adding enzyme type 1 subfamily. Monomer. Can also form homodimers and oligomers. Mg(2+) is required as a cofactor. It depends on Ni(2+) as a cofactor.

The enzyme catalyses a tRNA precursor + 2 CTP + ATP = a tRNA with a 3' CCA end + 3 diphosphate. The catalysed reaction is a tRNA with a 3' CCA end + 2 CTP + ATP = a tRNA with a 3' CCACCA end + 3 diphosphate. Functionally, catalyzes the addition and repair of the essential 3'-terminal CCA sequence in tRNAs without using a nucleic acid template. Adds these three nucleotides in the order of C, C, and A to the tRNA nucleotide-73, using CTP and ATP as substrates and producing inorganic pyrophosphate. tRNA 3'-terminal CCA addition is required both for tRNA processing and repair. Also involved in tRNA surveillance by mediating tandem CCA addition to generate a CCACCA at the 3' terminus of unstable tRNAs. While stable tRNAs receive only 3'-terminal CCA, unstable tRNAs are marked with CCACCA and rapidly degraded. This is Multifunctional CCA protein from Neisseria meningitidis serogroup B (strain ATCC BAA-335 / MC58).